Consider the following 511-residue polypeptide: Ribonuclease Y (511 aa).

A helical transmembrane segment spans residues 3–23 (VGILIGIIILGVVGFIQYTLI). Residues 201–286 (TVHVVALPND…EMVERAIKDV (86 aa)) form the KH domain. One can recognise an HD domain in the interval 327 to 420 (VLKHSIEVSY…VQAADAISAA (94 aa)).

This sequence belongs to the RNase Y family.

Its subcellular location is the cell membrane. Endoribonuclease that initiates mRNA decay. The sequence is that of Ribonuclease Y from Clostridium perfringens (strain ATCC 13124 / DSM 756 / JCM 1290 / NCIMB 6125 / NCTC 8237 / Type A).